The primary structure comprises 214 residues: tRNA (guanine-N(7)-)-methyltransferase (214 aa).

4 residues coordinate S-adenosyl-L-methionine: E43, E68, D95, and D117. Residue D117 is part of the active site. Substrate contacts are provided by residues K121, D153, and 190-193 (TEYE).

It belongs to the class I-like SAM-binding methyltransferase superfamily. TrmB family.

It catalyses the reaction guanosine(46) in tRNA + S-adenosyl-L-methionine = N(7)-methylguanosine(46) in tRNA + S-adenosyl-L-homocysteine. The protein operates within tRNA modification; N(7)-methylguanine-tRNA biosynthesis. Catalyzes the formation of N(7)-methylguanine at position 46 (m7G46) in tRNA. This is tRNA (guanine-N(7)-)-methyltransferase from Staphylococcus aureus (strain JH1).